Reading from the N-terminus, the 544-residue chain is Methyl-accepting chemotaxis protein McpP (544 aa).

A run of 3 helical transmembrane segments spans residues 12–32, 50–70, and 192–212; these read RLWL…LLML, VVQT…AGTL, and DASL…MLIA. Residues 213–267 form the HAMP domain; sequence RSIARPLQEAVQAMGNIASGESDLTRRLDTHGSDEITHLGEHFNRFNGKLQGVVG. Residues 272 to 508 form the Methyl-accepting transducer domain; sequence AAHALAQSAG…EINRNVLDTA (237 aa).

It belongs to the methyl-accepting chemotaxis (MCP) protein family.

Its subcellular location is the cell membrane. In terms of biological role, chemotactic-signal transducers respond to changes in the concentration of attractants and repellents in the environment, transduce a signal from the outside to the inside of the cell, and facilitate sensory adaptation through the variation of the level of methylation. McpP is a chemoreceptor that responds specifically to some C2 and C3 carboxylic acids. Recognizes acetate, pyruvate, propionate, and L-lactate. The sequence is that of Methyl-accepting chemotaxis protein McpP from Pseudomonas putida (strain ATCC 47054 / DSM 6125 / CFBP 8728 / NCIMB 11950 / KT2440).